We begin with the raw amino-acid sequence, 356 residues long: Alanine racemase, catabolic (356 aa).

Lys-35 (proton acceptor; specific for D-alanine) is an active-site residue. Lys-35 carries the N6-(pyridoxal phosphate)lysine modification. Arg-130 serves as a coordination point for substrate. The active-site Proton acceptor; specific for L-alanine is Tyr-253. Residue Met-301 participates in substrate binding.

Belongs to the alanine racemase family. It depends on pyridoxal 5'-phosphate as a cofactor.

It catalyses the reaction L-alanine = D-alanine. In terms of biological role, isomerizes L-alanine to D-alanine which is then oxidized to pyruvate by DadA. The protein is Alanine racemase, catabolic (dadB) of Klebsiella aerogenes (Enterobacter aerogenes).